The chain runs to 481 residues: WASH complex subunit 1 (481 aa).

Positions 1–54 (MVRMTQKRYLEGQVYSVPLIQPDLRREEAVHQITDALQYLEMISTDIFTRVSES) are required for WASH complex assembly. Disordered stretches follow at residues 273-417 (SVPA…SGGD) and 429-481 (RRKG…DWEA). Pro residues predominate over residues 304–341 (APPPPPPPPPPPPEPTHVPVPPPGTSAAPPPPPPPPPM). The VCA stretch occupies residues 359–481 (KGAPSEVVQP…AADDEDDWEA (123 aa)). Residues 371 to 393 (GRASLLESIRNAGGIGKANLRNV) form the WH2 domain. A compositionally biased stretch (basic and acidic residues) spans 392–407 (NVKERKMEKKKQKEQE).

This sequence belongs to the WASH1 family. As to quaternary structure, component of the WASH complex.

The protein resides in the early endosome membrane. The protein localises to the recycling endosome membrane. Functionally, acts as a nucleation-promoting factor at the surface of endosomes, where it recruits and activates the Arp2/3 complex to induce actin polymerization, playing a key role in the fission of tubules that serve as transport intermediates during endosome sorting. This chain is WASH complex subunit 1, found in Danio rerio (Zebrafish).